We begin with the raw amino-acid sequence, 316 residues long: Apolipoprotein E (316 aa).

Residues 1–18 form the signal peptide; that stretch reads MKVLWVALVITLLAGCQA. 8 tandem repeats follow at residues 79–100, 101–122, 123–144, 145–166, 167–188, 189–210, 211–232, and 233–254. The interval 79 to 254 is 8 X 22 AA approximate tandem repeats; the sequence is VLMDETMKEV…HLEEMREQLE (176 aa). Position 142 is a methionine sulfoxide (Met-142). The tract at residues 157 to 167 is LDL and other lipoprotein receptors binding; sequence HLRKLRKRLLR. A heparin-binding site is contributed by 161–164; that stretch reads LRKR. The tract at residues 209–289 is lipid-binding and lipoprotein association; sequence AATVGTLASQ…SWFEPLVEDM (81 aa). 228–235 contributes to the heparin binding site; sequence HQKLRGRM. The segment at 265–316 is homooligomerization; the sequence is SQMRLQAEAFQARLKSWFEPLVEDMQRQWAGLVEKVQLAMATSPTSAPIENS. The interval 277 to 289 is specificity for association with VLDL; that stretch reads RLKSWFEPLVEDM.

This sequence belongs to the apolipoprotein A1/A4/E family. Homotetramer. May interact with ABCA1; functionally associated with ABCA1 in the biogenesis of HDLs. May interact with APP/A4 amyloid-beta peptide; the interaction is extremely stable in vitro but its physiological significance is unclear. May interact with MAPT. May interact with MAP2. In the cerebrospinal fluid, interacts with secreted SORL1. Interacts with PMEL; this allows the loading of PMEL luminal fragment on ILVs to induce fibril nucleation. In terms of processing, APOE exists as multiple glycosylated and sialylated glycoforms within cells and in plasma. The extent of glycosylation and sialylation are tissue and context specific. Post-translationally, glycated in plasma VLDL. Phosphorylated by FAM20C in the extracellular medium.

It is found in the secreted. The protein localises to the extracellular space. Its subcellular location is the extracellular matrix. The protein resides in the extracellular vesicle. It localises to the endosome. It is found in the multivesicular body. APOE is an apolipoprotein, a protein associating with lipid particles, that mainly functions in lipoprotein-mediated lipid transport between organs via the plasma and interstitial fluids. APOE is a core component of plasma lipoproteins and is involved in their production, conversion and clearance. Apolipoproteins are amphipathic molecules that interact both with lipids of the lipoprotein particle core and the aqueous environment of the plasma. As such, APOE associates with chylomicrons, chylomicron remnants, very low density lipoproteins (VLDL) and intermediate density lipoproteins (IDL) but shows a preferential binding to high-density lipoproteins (HDL). It also binds a wide range of cellular receptors including the LDL receptor/LDLR and the very low-density lipoprotein receptor/VLDLR that mediate the cellular uptake of the APOE-containing lipoprotein particles. Finally, APOE also has a heparin-binding activity and binds heparan-sulfate proteoglycans on the surface of cells, a property that supports the capture and the receptor-mediated uptake of APOE-containing lipoproteins by cells. This Orcinus orca (Killer whale) protein is Apolipoprotein E (APOE).